Here is a 398-residue protein sequence, read N- to C-terminus: Elongation factor Tu (398 aa).

The tr-type G domain maps to 10–207; it reads KPHVNIGTIG…TVDEYIPEPE (198 aa). The interval 19–26 is G1; that stretch reads GHVDHGKT. Residue 19-26 coordinates GTP; the sequence is GHVDHGKT. T26 serves as a coordination point for Mg(2+). The G2 stretch occupies residues 63 to 67; that stretch reads GITIN. The interval 84 to 87 is G3; it reads DAPG. Residues 84–88 and 139–142 contribute to the GTP site; these read DAPGH and NKVD. The interval 139 to 142 is G4; the sequence is NKVD. Residues 177 to 179 form a G5 region; it reads SAL.

Belongs to the TRAFAC class translation factor GTPase superfamily. Classic translation factor GTPase family. EF-Tu/EF-1A subfamily. In terms of assembly, monomer.

It is found in the cytoplasm. The enzyme catalyses GTP + H2O = GDP + phosphate + H(+). Functionally, GTP hydrolase that promotes the GTP-dependent binding of aminoacyl-tRNA to the A-site of ribosomes during protein biosynthesis. The protein is Elongation factor Tu of Streptococcus thermophilus (strain CNRZ 1066).